Consider the following 714-residue polypeptide: MASEAPSPPRSPPPPTSPEPELAQLRRKVEKLERELRSCKRQVREIEKLLHHTERLYQNAESNNQELRTQVEELSKILQRGRNEDNKKSDVEVQTENHAPWSISDYFYQTYYNDVSLPNKVTELSDQQDQAIETSILNSKDHLQVENDAYPGTDRTENVKYRQVDHFASNSQEPASALATEDTSLEGSSLAESLRAAAEAAVSQTGFSYDENTGLYFDHSTGFYYDSENQLYYDPSTGIYYYCDVESGRYQFHSRVDLQPYPTSSTKQSKDKKLKKKRKDPDSSATNEEKDLNSEDQKAFSVEHTSCNEEENFANMKKKAKIGIHHKNSPPKVTVPTSGNTIESPLHENISNSTSFKDEKIMETDSEPEEGEITDSQTEDSYDEAITSEGNVTAEDSEDEDEDKIWPPCIRVIVIRSPVLQIGSLFIITAVNPATIGREKDMEHTLRIPEVGVSKFHAEIYFDHDLQSYVLVDQGSQNGTIVNGKQILQPKTKCDPYVLEHGDEVKIGETVLSFHIHPGSDTCDGCEPGQVRAHLRLDKKDESFVGPTLSKEEKELERRKELKKIRVKYGLQNTEYEDEKTLKNPKYKDRAGKRREQVGSEGTFQRDDAPASVHSEITDSNKGRKMLEKMGWKKGEGLGKDGGGMKTPIQLQLRRTHAGLGTGKPSSFEDVHLLQNKNKKNWDKARERFTENFPETKPQKDDPGTMPWVKGTLE.

The segment covering 1 to 18 (MASEAPSPPRSPPPPTSP) has biased composition (pro residues). Disordered regions lie at residues 1 to 22 (MASEAPSPPRSPPPPTSPEPEL), 259 to 307 (QPYP…HTSC), and 322 to 384 (IGIH…SYDE). Ala2 is subject to N-acetylalanine. Phosphoserine is present on residues Ser7 and Ser11. A coiled-coil region spans residues 18 to 88 (PEPELAQLRR…QRGRNEDNKK (71 aa)). The segment covering 279 to 298 (KDPDSSATNEEKDLNSEDQK) has biased composition (basic and acidic residues). Positions 335-355 (VPTSGNTIESPLHENISNSTS) are enriched in polar residues. The residue at position 344 (Ser344) is a Phosphoserine. A compositionally biased stretch (acidic residues) spans 364–383 (TDSEPEEGEITDSQTEDSYD). The region spanning 434 to 487 (ATIGREKDMEHTLRIPEVGVSKFHAEIYFDHDLQSYVLVDQGSQNGTIVNGKQI) is the FHA domain. Positions 586–609 (KYKDRAGKRREQVGSEGTFQRDDA) are enriched in basic and acidic residues. Disordered stretches follow at residues 586–617 (KYKDRAGKRREQVGSEGTFQRDDAPASVHSEI) and 655–714 (RTHA…GTLE). Residues 619–665 (DSNKGRKMLEKMGWKKGEGLGKDGGGMKTPIQLQLRRTHAGLGTGKP) form the G-patch domain. Lys664 bears the N6-acetyllysine mark. The segment covering 680–690 (KNWDKARERFT) has biased composition (basic and acidic residues).

In terms of assembly, interacts with the secreted angiogenic factor TNFSF12. Widely expressed. Expressed in endothelial cells, vascular smooth muscle cells and osteoblasts. Expressed in umbilical vein endothelial cells and microvascular endothelial cells.

The protein resides in the cytoplasm. The protein localises to the secreted. Its function is as follows. Promotes angiogenesis and the proliferation of endothelial cells. Able to bind to endothelial cells and promote cell proliferation, suggesting that it may act in an autocrine fashion. The chain is Angiogenic factor with G patch and FHA domains 1 (AGGF1) from Homo sapiens (Human).